We begin with the raw amino-acid sequence, 399 residues long: Subtilisin-like protease 1 (399 aa).

The first 19 residues, 1–19, serve as a signal peptide directing secretion; that stretch reads MGVFRFISISLAAVSAANA. The propeptide occupies 20–116; it reads AQILSMPHAQ…VEPDTIISVH (97 aa). Positions 34-115 constitute an Inhibitor I9 domain; it reads SYIVMMKDDT…FVEPDTIISV (82 aa). The Peptidase S8 domain maps to 126 to 399; that stretch reads SWGLARISNP…TNVLINNGGA (274 aa). Catalysis depends on charge relay system residues Asp158 and His190. Residues 175–198 form a disordered region; sequence GSNQVNDGDDRDGSGHGTHTSGTM. An N-linked (GlcNAc...) asparagine glycan is attached at Asn251. The segment covering 282-294 has biased composition (polar residues); it reads NDNQDAQSSSPAS. The interval 282–312 is disordered; sequence NDNQDAQSSSPASEPSVCTVGSSAEDDSRSS. Residue Ser345 is the Charge relay system of the active site.

It belongs to the peptidase S8 family.

The protein localises to the secreted. Its function is as follows. Secreted subtilisin-like serine protease with keratinolytic activity that contributes to pathogenicity. This Arthroderma benhamiae (Trichophyton mentagrophytes) protein is Subtilisin-like protease 1 (SUB1).